The primary structure comprises 141 residues: Large ribosomal subunit protein uL11 (141 aa).

It belongs to the universal ribosomal protein uL11 family. Part of the ribosomal stalk of the 50S ribosomal subunit. Interacts with L10 and the large rRNA to form the base of the stalk. L10 forms an elongated spine to which L12 dimers bind in a sequential fashion forming a multimeric L10(L12)X complex. One or more lysine residues are methylated.

Its function is as follows. Forms part of the ribosomal stalk which helps the ribosome interact with GTP-bound translation factors. The chain is Large ribosomal subunit protein uL11 from Chlamydia caviae (strain ATCC VR-813 / DSM 19441 / 03DC25 / GPIC) (Chlamydophila caviae).